Here is a 361-residue protein sequence, read N- to C-terminus: Plasmid recombination enzyme (361 aa).

Residues Tyr44 and Tyr114 each coordinate DNA. The segment at 331 to 361 (RAGLKEPSKKAPESSQELDRHKSDELGGPHL) is disordered.

This sequence belongs to the plasmid mobilization pre family.

The interaction of the RSA site and the pre protein may not only serve a function in plasmid maintenance, but also contribute to the distribution of small antibiotic resistance plasmids among Gram-positive bacteria. The polypeptide is Plasmid recombination enzyme (preA) (Lactiplantibacillus plantarum (Lactobacillus plantarum)).